A 151-amino-acid polypeptide reads, in one-letter code: Mating pheromone 3 (151 aa).

Positions 1-16 (MKAIFIILAILMVTQA) are cleaved as a signal peptide. A propeptide spanning residues 17-52 (FKMTSKVNTKLQSQIQSKFQSKNKLASTFQTSSQLK) is cleaved from the precursor.

Its subcellular location is the secreted. Mating ciliate pheromones (or gamones) are diffusible extracellular communication signals that distinguish different intraspecific classes of cells commonly referred to as 'mating types'. They prepare the latter for conjugation by changing their cell surface properties. The protein is Mating pheromone 3 (PHR3) of Euplotoides octocarinatus (Freshwater ciliate).